Consider the following 303-residue polypeptide: N-acetyl-D-glucosamine kinase (303 aa).

Residues 4–11 and 133–140 contribute to the ATP site; these read GFDIGGTK and GVGGGLIF. Zn(2+)-binding residues include histidine 157, cysteine 177, cysteine 179, and cysteine 184.

It belongs to the ROK (NagC/XylR) family. NagK subfamily.

It catalyses the reaction N-acetyl-D-glucosamine + ATP = N-acetyl-D-glucosamine 6-phosphate + ADP + H(+). The protein operates within cell wall biogenesis; peptidoglycan recycling. Catalyzes the phosphorylation of N-acetyl-D-glucosamine (GlcNAc) derived from cell-wall degradation, yielding GlcNAc-6-P. The polypeptide is N-acetyl-D-glucosamine kinase (Escherichia fergusonii (strain ATCC 35469 / DSM 13698 / CCUG 18766 / IAM 14443 / JCM 21226 / LMG 7866 / NBRC 102419 / NCTC 12128 / CDC 0568-73)).